We begin with the raw amino-acid sequence, 169 residues long: Lipoprotein signal peptidase (169 aa).

The next 3 helical transmembrane spans lie at Trp-12–Gly-32, Trp-70–Ser-90, and Ala-102–Val-122. Residues Asp-123 and Asp-141 contribute to the active site. A helical transmembrane segment spans residues Phe-137–Leu-157.

Belongs to the peptidase A8 family.

The protein resides in the cell inner membrane. It carries out the reaction Release of signal peptides from bacterial membrane prolipoproteins. Hydrolyzes -Xaa-Yaa-Zaa-|-(S,diacylglyceryl)Cys-, in which Xaa is hydrophobic (preferably Leu), and Yaa (Ala or Ser) and Zaa (Gly or Ala) have small, neutral side chains.. Its pathway is protein modification; lipoprotein biosynthesis (signal peptide cleavage). This protein specifically catalyzes the removal of signal peptides from prolipoproteins. This chain is Lipoprotein signal peptidase, found in Serratia proteamaculans (strain 568).